The following is a 205-amino-acid chain: Transcriptional regulatory protein PdtaR (205 aa).

The Response regulatory domain maps to 15–129 (RVLIAEDEAL…DLIPAIELAV (115 aa)). Asp65 carries the 4-aspartylphosphate modification. The ANTAR domain occupies 135–196 (ITALEGEVAT…TMKRVAEVVL (62 aa)).

Post-translationally, phosphorylated and activated by PdtaS.

Its subcellular location is the cytoplasm. Member of the two-component regulatory system PdtaR/PdtaS. This two-component system plays an essential role in mycobacterial adaptation to poor nutrient conditions. PdtaR probably acts at the level of transcriptional antitermination rather than transcriptional initiation. In terms of biological role, in addition, the PdtaR/PdtaS two-component system controls copper and nitric oxide (NO) resistance downstream of the intramembrane protease Rip1. This coupled Rip1/PdtaS/PdtaR circuit controls NO resistance and acute lung infection in mice by relieving PdtaR/PdtaS-mediated repression of isonitrile chalkophore biosynthesis. Two signals are required to fully inactivate the PdtaR/PdtaS system and mediate NO resistance: a cytoplasmic inhibitory signal through the PdtaS kinase mediated by direct sensing of NO and the production of PPE1-5', an NO-induced small RNA, to sequester PdtaR. This Mycobacterium tuberculosis (strain CDC 1551 / Oshkosh) protein is Transcriptional regulatory protein PdtaR (pdtaR).